An 878-amino-acid chain; its full sequence is Leucine--tRNA ligase (878 aa).

The 'HIGH' region motif lies at 56 to 66 (PYPSGKLHMGH). The short motif at 630–634 (KMSKS) is the 'KMSKS' region element. Lys-633 lines the ATP pocket.

The protein belongs to the class-I aminoacyl-tRNA synthetase family.

The protein localises to the cytoplasm. The catalysed reaction is tRNA(Leu) + L-leucine + ATP = L-leucyl-tRNA(Leu) + AMP + diphosphate. The chain is Leucine--tRNA ligase from Prochlorococcus marinus (strain MIT 9303).